We begin with the raw amino-acid sequence, 948 residues long: P cell-type agglutination protein map4 (948 aa).

The first 23 residues, 1 to 23, serve as a signal peptide directing secretion; that stretch reads MNSYAILLSLFFSFERLLTLANA. Residues Asn31, Asn32, and Asn57 are each glycosylated (N-linked (GlcNAc...) asparagine). 2 disordered regions span residues 136-174 and 253-333; these read IPRGDSATSTSIAPTYSASDSSATTITSSSPSTSIIGTG and FYET…PTTY. The segment covering 149–174 has biased composition (low complexity); sequence PTYSASDSSATTITSSSPSTSIIGTG. A compositionally biased stretch (polar residues) spans 253 to 264; sequence FYETKSSTSSVP. A compositionally biased stretch (low complexity) spans 265-332; sequence TQTIDSSSFT…PSLSSALPTT (68 aa). N-linked (GlcNAc...) asparagine glycosylation occurs at Asn383. Residues 408–432 form a disordered region; it reads LTSSTKKIPSTTLPTSSKMITTTTP. 7 N-linked (GlcNAc...) asparagine glycosylation sites follow: Asn436, Asn469, Asn491, Asn522, Asn553, Asn568, and Asn598. A run of 5 repeats spans residues 617-652, 653-688, 689-724, 725-760, and 761-796. The segment at 617 to 796 is 5 X 36 AA approximate tandem repeats; that stretch reads SYVTETTTSG…GTVLIDVPTP (180 aa). In terms of domain architecture, DIPSY spans 796-948; it reads PTASSSPFPS…ANVVLRALEY (153 aa). N-linked (GlcNAc...) asparagine glycosylation is present at Asn921.

This sequence belongs to the mam3/map4 family.

The protein resides in the cell surface. P cell-type specific protein which involved in agglutination during conjugation. This chain is P cell-type agglutination protein map4, found in Schizosaccharomyces pombe (strain 972 / ATCC 24843) (Fission yeast).